Reading from the N-terminus, the 480-residue chain is Transposase for transposon Tn552 (480 aa).

A DNA-binding region (H-T-H motif) is located at residues 36-55 (LSSISKSKGIALSTLYRWNK). In terms of domain architecture, Integrase catalytic spans 155–341 (ESSRPNEIWQ…TPINRWNSNH (187 aa)). The tract at residues 438-480 (RKHLKQNIASPSTTDLIKEEKSYGYSPQETTKNVKKLKRYRND) is disordered. A compositionally biased stretch (basic residues) spans 470 to 480 (NVKKLKRYRND).

This Staphylococcus aureus protein is Transposase for transposon Tn552.